The primary structure comprises 652 residues: DNA mismatch repair protein MutL (652 aa).

The protein belongs to the DNA mismatch repair MutL/HexB family.

Functionally, this protein is involved in the repair of mismatches in DNA. It is required for dam-dependent methyl-directed DNA mismatch repair. May act as a 'molecular matchmaker', a protein that promotes the formation of a stable complex between two or more DNA-binding proteins in an ATP-dependent manner without itself being part of a final effector complex. In Aliivibrio salmonicida (strain LFI1238) (Vibrio salmonicida (strain LFI1238)), this protein is DNA mismatch repair protein MutL.